The primary structure comprises 455 residues: Bifunctional protein GlmU (455 aa).

Residues 1 to 225 (MNIVILAAGM…EWETLGVNSK (225 aa)) form a pyrophosphorylase region. UDP-N-acetyl-alpha-D-glucosamine-binding positions include 6–9 (LAAG), K20, Q71, 76–77 (GT), 98–100 (YGD), G135, E150, N165, and N223. Residue D100 participates in Mg(2+) binding. N223 is a Mg(2+) binding site. The tract at residues 226-246 (VQLAELERIHQRNLAQQLLED) is linker. An N-acetyltransferase region spans residues 247–455 (GVTLIDPARI…QRPVKQKKEG (209 aa)). Positions 329 and 347 each coordinate UDP-N-acetyl-alpha-D-glucosamine. H359 serves as the catalytic Proton acceptor. Residues Y362 and N373 each coordinate UDP-N-acetyl-alpha-D-glucosamine. Residues A376, 382 to 383 (NY), S401, A419, and R436 each bind acetyl-CoA.

This sequence in the N-terminal section; belongs to the N-acetylglucosamine-1-phosphate uridyltransferase family. The protein in the C-terminal section; belongs to the transferase hexapeptide repeat family. Homotrimer. Mg(2+) serves as cofactor.

It is found in the cytoplasm. It carries out the reaction alpha-D-glucosamine 1-phosphate + acetyl-CoA = N-acetyl-alpha-D-glucosamine 1-phosphate + CoA + H(+). It catalyses the reaction N-acetyl-alpha-D-glucosamine 1-phosphate + UTP + H(+) = UDP-N-acetyl-alpha-D-glucosamine + diphosphate. The protein operates within nucleotide-sugar biosynthesis; UDP-N-acetyl-alpha-D-glucosamine biosynthesis; N-acetyl-alpha-D-glucosamine 1-phosphate from alpha-D-glucosamine 6-phosphate (route II): step 2/2. It participates in nucleotide-sugar biosynthesis; UDP-N-acetyl-alpha-D-glucosamine biosynthesis; UDP-N-acetyl-alpha-D-glucosamine from N-acetyl-alpha-D-glucosamine 1-phosphate: step 1/1. It functions in the pathway bacterial outer membrane biogenesis; LPS lipid A biosynthesis. Catalyzes the last two sequential reactions in the de novo biosynthetic pathway for UDP-N-acetylglucosamine (UDP-GlcNAc). The C-terminal domain catalyzes the transfer of acetyl group from acetyl coenzyme A to glucosamine-1-phosphate (GlcN-1-P) to produce N-acetylglucosamine-1-phosphate (GlcNAc-1-P), which is converted into UDP-GlcNAc by the transfer of uridine 5-monophosphate (from uridine 5-triphosphate), a reaction catalyzed by the N-terminal domain. The chain is Bifunctional protein GlmU from Ralstonia pickettii (strain 12J).